A 165-amino-acid chain; its full sequence is Protein SprT (165 aa).

The 145-residue stretch at 19–163 folds into the SprT-like domain; it reads REKLAQANLK…RCVKCGEPLV (145 aa). Residue histidine 78 coordinates Zn(2+). Glutamate 79 is an active-site residue. Position 82 (histidine 82) interacts with Zn(2+).

The protein belongs to the SprT family. The cofactor is Zn(2+).

It localises to the cytoplasm. The protein is Protein SprT of Enterobacter sp. (strain 638).